A 279-amino-acid chain; its full sequence is DegV domain-containing protein lmo1863 (279 aa).

Positions 4–278 (IKIITDSTAG…TGAFAFMYYT (275 aa)) constitute a DegV domain. Residues Ser-62 and Ser-94 each contribute to the hexadecanoate site.

May bind long-chain fatty acids, such as palmitate, and may play a role in lipid transport or fatty acid metabolism. The sequence is that of DegV domain-containing protein lmo1863 from Listeria monocytogenes serovar 1/2a (strain ATCC BAA-679 / EGD-e).